Consider the following 168-residue polypeptide: Peptide deformylase 2 (168 aa).

Residues Cys91 and His133 each coordinate Fe cation. The active site involves Glu134. Position 137 (His137) interacts with Fe cation.

The protein belongs to the polypeptide deformylase family. Fe(2+) serves as cofactor.

It carries out the reaction N-terminal N-formyl-L-methionyl-[peptide] + H2O = N-terminal L-methionyl-[peptide] + formate. Removes the formyl group from the N-terminal Met of newly synthesized proteins. Requires at least a dipeptide for an efficient rate of reaction. N-terminal L-methionine is a prerequisite for activity but the enzyme has broad specificity at other positions. The chain is Peptide deformylase 2 from Vibrio parahaemolyticus serotype O3:K6 (strain RIMD 2210633).